The primary structure comprises 352 residues: Protein RecA (352 aa).

65-72 is an ATP binding site; it reads GPESSGKT. The tract at residues 333–352 is disordered; that stretch reads VKAAANREPVEEVEEADTDI. Acidic residues predominate over residues 343–352; sequence EEVEEADTDI.

This sequence belongs to the RecA family.

The protein localises to the cytoplasm. Can catalyze the hydrolysis of ATP in the presence of single-stranded DNA, the ATP-dependent uptake of single-stranded DNA by duplex DNA, and the ATP-dependent hybridization of homologous single-stranded DNAs. It interacts with LexA causing its activation and leading to its autocatalytic cleavage. The protein is Protein RecA of Pseudomonas fluorescens.